Here is a 469-residue protein sequence, read N- to C-terminus: MIKRLPDDFIFGGATAAYQAEGATTIDGKGAVAWDRYLKDNYWYTAEPASDFYHQYPVDLALAEQFGINGIRISIAWSRIFPEGFGEVNAKGVAFYHSLFAECHKHHVEPFVTLHHFDTPEALHSRGDFLNRENIDHFVAYAAYCFKEFPEVTYWTTFNEIGPIGDGQYLVGKFPPGISYDLAKVFQSHHNMMLAHARALVHYKEQAYPGEIGIVHALPTKYPLDPKKPGDVLAAELDDIIHNKFILDATYLGQYSEKTMAGVKHILAENGGSLDLRPEDFELLQAAKDLNDFLGINYYMSDWLRAFDGETEIIHNGKGEKGGSKYQIKGVGQRVFDVDVPRTDWDWMIYPQGLYDQIMRIKADYPGYKKIYITENGLGYKDTCIDGRIDDDARIDYIKQHLAVIADAISTGANVKGYFIWSLMDVFSWSNGYDKRYGLFYVDFETQKRYPKKSAYWYQQLAATKTISM.

D-galactose 6-phosphate contacts are provided by Gln-19, His-116, Asn-159, Glu-160, and Asn-297. The Proton donor role is filled by Glu-160. Glu-375 functions as the Nucleophile in the catalytic mechanism. Residues Ser-428, Trp-429, Lys-435, and Tyr-437 each coordinate D-galactose 6-phosphate.

It belongs to the glycosyl hydrolase 1 family.

The catalysed reaction is a 6-phospho-beta-D-galactoside + H2O = D-galactose 6-phosphate + an alcohol. It functions in the pathway carbohydrate metabolism; lactose degradation; D-galactose 6-phosphate and beta-D-glucose from lactose 6-phosphate: step 1/1. The protein is 6-phospho-beta-galactosidase of Streptococcus equi subsp. zooepidemicus (strain H70).